A 261-amino-acid polypeptide reads, in one-letter code: 4-phosphopantoate--beta-alanine ligase (261 aa).

ATP contacts are provided by residues arginine 17, arginine 39, 181–183 (DLN), 187–188 (RS), and 199–200 (NI).

It belongs to the archaeal phosphopantothenate synthetase family. Homodimer.

The enzyme catalyses (R)-4-phosphopantoate + beta-alanine + ATP = (R)-4'-phosphopantothenate + AMP + diphosphate + H(+). It functions in the pathway cofactor biosynthesis; coenzyme A biosynthesis. Activity is not affected by 4'-phosphopantothenate or CoA/acetyl-CoA. Its function is as follows. Catalyzes the condensation of (R)-4-phosphopantoate and beta-alanine to 4'-phosphopantothenate in the CoA biosynthesis pathway. Cannot use (R)-pantoate as substrate and thus does not display pantothenate synthetase (PS) activity. Displays strict specificity for its natural substrates, 4-phosphopantoate, ATP and beta-alanine. The sequence is that of 4-phosphopantoate--beta-alanine ligase from Thermococcus kodakarensis (strain ATCC BAA-918 / JCM 12380 / KOD1) (Pyrococcus kodakaraensis (strain KOD1)).